A 380-amino-acid chain; its full sequence is Cytochrome b (380 aa).

The next 4 membrane-spanning stretches (helical) occupy residues phenylalanine 34–methionine 54, tryptophan 78–isoleucine 99, tryptophan 114–leucine 134, and phenylalanine 179–leucine 199. 2 residues coordinate heme b: histidine 84 and histidine 98. The heme b site is built by histidine 183 and histidine 197. Histidine 202 is an a ubiquinone binding site. 4 helical membrane passes run tyrosine 227–serine 247, leucine 289–histidine 309, leucine 321–glycine 341, and tyrosine 348–proline 368.

The protein belongs to the cytochrome b family. As to quaternary structure, the cytochrome bc1 complex contains 3 respiratory subunits (MT-CYB, CYC1 and UQCRFS1), 2 core proteins (UQCRC1 and UQCRC2) and probably 6 low-molecular weight proteins. Requires heme b as cofactor.

It localises to the mitochondrion inner membrane. In terms of biological role, component of the ubiquinol-cytochrome c reductase complex (complex III or cytochrome b-c1 complex) that is part of the mitochondrial respiratory chain. The b-c1 complex mediates electron transfer from ubiquinol to cytochrome c. Contributes to the generation of a proton gradient across the mitochondrial membrane that is then used for ATP synthesis. The protein is Cytochrome b (MT-CYB) of Branchiostoma lanceolatum (Common lancelet).